Consider the following 273-residue polypeptide: NADPH-dependent 7-cyano-7-deazaguanine reductase (273 aa).

Position 81-83 (81-83) interacts with substrate; that stretch reads VES. 83-84 provides a ligand contact to NADPH; it reads SK. Catalysis depends on C179, which acts as the Thioimide intermediate. D186 acts as the Proton donor in catalysis. 218-219 serves as a coordination point for substrate; it reads AE. 247-248 contacts NADPH; sequence RG.

Belongs to the GTP cyclohydrolase I family. QueF type 2 subfamily. In terms of assembly, homodimer.

The protein resides in the cytoplasm. It carries out the reaction 7-aminomethyl-7-carbaguanine + 2 NADP(+) = 7-cyano-7-deazaguanine + 2 NADPH + 3 H(+). It participates in tRNA modification; tRNA-queuosine biosynthesis. In terms of biological role, catalyzes the NADPH-dependent reduction of 7-cyano-7-deazaguanine (preQ0) to 7-aminomethyl-7-deazaguanine (preQ1). The protein is NADPH-dependent 7-cyano-7-deazaguanine reductase of Rickettsia bellii (strain OSU 85-389).